Here is a 722-residue protein sequence, read N- to C-terminus: Glycine--tRNA ligase beta subunit (722 aa).

The protein belongs to the class-II aminoacyl-tRNA synthetase family. As to quaternary structure, tetramer of two alpha and two beta subunits.

The protein resides in the cytoplasm. It catalyses the reaction tRNA(Gly) + glycine + ATP = glycyl-tRNA(Gly) + AMP + diphosphate. This chain is Glycine--tRNA ligase beta subunit (glyS), found in Xylella fastidiosa (strain 9a5c).